The primary structure comprises 182 residues: Proline-rich protein, Y-linked (182 aa).

Disordered regions lie at residues 1–22 and 89–108; these read MMRR…KPRD and VPAD…PPPG. Pro residues predominate over residues 91 to 108; that stretch reads ADPPPASPYRTSPRPPPG. The region spanning 154–167 is the DUF1725 domain; it reads WMKLETIILSKLSQ.

The chain is Proline-rich protein, Y-linked (PRORY) from Homo sapiens (Human).